The sequence spans 1463 residues: Probable oxidoreductase PXDNL (1463 aa).

Residues 1–23 (MEPRLFCWTTLFLLAGWCLPGLP) form the signal peptide. One can recognise an LRRNT domain in the interval 24–50 (CPSRCLCFKSTVRCMHLMLDHIPQVPQ). 5 LRR repeats span residues 51-72 (QTTVLDLRFNRIREIPGSAFKK), 75-96 (NLNTLLLNNNHIRKISRNAFEG), 99-120 (NLLYLYLYKNEIHALDKQTFKG), 123-144 (SLEHLYIHFNQLEMLQPETFGD), and 147-168 (RLERLFLHNNKLSKIPAGSFSN). An LRRCT domain is found at 180–233 (NALVCDCDLMWLGELLQGFAQHGHTQAAATCEYPRRLHGRAVASVTVEEFNCQS). Ig-like C2-type domains are found at residues 234-322 (PRIT…AMLR), 330-414 (PSFV…ANII), 419-504 (PQFT…VQLT), and 507-596 (PKAL…MFLT). 5 cysteine pairs are disulfide-bonded: Cys255-Cys305, Cys351-Cys398, Cys440-Cys488, Cys532-Cys580, and Cys718-Cys734. Asn387 is a glycosylation site (N-linked (GlcNAc...) asparagine). The Proton acceptor role is filled by His812. Asp813 contributes to the Ca(2+) binding site. Disulfide bonds link Cys832/Cys842 and Cys836/Cys859. Thr891, Tyr893, Asp895, and Ser897 together coordinate Ca(2+). A disulfide bond links Cys944 and Cys953. Residue His1057 participates in heme b binding. Cystine bridges form between Cys1160–Cys1217 and Cys1258–Cys1284. A VWFC domain is found at 1393–1451 (AGCTDVRGVPRKAEERWMKEDCTHCICESGQVTCVVEICPPAPCPSPELVKGTCCPVCR).

It belongs to the peroxidase family. XPO subfamily. Interacts with PXDN; this interaction inhibits the peroxidase activity of PXDN. Requires heme b as cofactor. In terms of processing, phosphorylation by SRC on tyrosine residues is required for targeting to polysomes. In terms of tissue distribution, the 57 kDa isoform PMR1 is the only form detected at protein levels in human cell lines. Expressed in heart.

It is found in the secreted. It localises to the endoplasmic reticulum. The protein resides in the cell membrane. The protein localises to the cytoplasm. Probable oxidoreductase. Lacks peroxidase activity. Inhibits the peroxidase activity of PXDN through its interaction. In terms of biological role, endonuclease selectively degrading some target mRNAs while they are engaged by translating ribosomes, among which albumin and beta-globin mRNAs. This Homo sapiens (Human) protein is Probable oxidoreductase PXDNL.